The following is a 469-amino-acid chain: RuvB-like helicase 2 (469 aa).

Position 74–81 (74–81 (GPPSTGKT)) interacts with ATP.

Belongs to the RuvB family. May form heterododecamers with RVB1. Component of the SWR1 chromatin remodeling complex, the INO80 chromatin remodeling complex, and of the R2TP complex.

The protein resides in the nucleus. It carries out the reaction ATP + H2O = ADP + phosphate + H(+). Functionally, DNA helicase which participates in several chromatin remodeling complexes, including the SWR1 and the INO80 complexes. The SWR1 complex mediates the ATP-dependent exchange of histone H2A for the H2A variant HZT1 leading to transcriptional regulation of selected genes by chromatin remodeling. The INO80 complex remodels chromatin by shifting nucleosomes and is involved in DNA repair. Also involved in pre-rRNA processing. The chain is RuvB-like helicase 2 (RVB2) from Eremothecium gossypii (strain ATCC 10895 / CBS 109.51 / FGSC 9923 / NRRL Y-1056) (Yeast).